A 61-amino-acid polypeptide reads, in one-letter code: Sec-independent protein translocase protein TatA (61 aa).

The chain crosses the membrane as a helical span at residues 2–22 (GLSGISPLSLLLILAIIVALF).

The protein belongs to the TatA/E family. As to quaternary structure, the Tat system comprises two distinct complexes: a TatABC complex, containing multiple copies of TatA, TatB and TatC subunits, and a separate TatA complex, containing only TatA subunits. Substrates initially bind to the TatABC complex, which probably triggers association of the separate TatA complex to form the active translocon.

Its subcellular location is the cell inner membrane. In terms of biological role, part of the twin-arginine translocation (Tat) system that transports large folded proteins containing a characteristic twin-arginine motif in their signal peptide across membranes. TatA could form the protein-conducting channel of the Tat system. The chain is Sec-independent protein translocase protein TatA from Legionella pneumophila (strain Corby).